Here is a 280-residue protein sequence, read N- to C-terminus: Putative ABC transporter ATP-binding protein PYRAB03730 (280 aa).

Residues Ile4–Arg244 form the ABC transporter domain. Gly38–Ser45 contacts ATP.

This sequence belongs to the ABC transporter superfamily.

Its subcellular location is the cell membrane. Probably part of an ABC transporter complex. Responsible for energy coupling to the transport system. This chain is Putative ABC transporter ATP-binding protein PYRAB03730, found in Pyrococcus abyssi (strain GE5 / Orsay).